Reading from the N-terminus, the 254-residue chain is Small ribosomal subunit protein uS3 (254 aa).

The region spanning 38–106 (IRKYVLARIP…DVQINIFEIK (69 aa)) is the KH type-2 domain. The segment covering 215 to 238 (NVGNAASGASSSSNNDNASPNQGG) has biased composition (low complexity). Positions 215-254 (NVGNAASGASSSSNNDNASPNQGGPRRKRGGEGNRKKSNK) are disordered. Residues 244–254 (GGEGNRKKSNK) are compositionally biased toward basic and acidic residues.

The protein belongs to the universal ribosomal protein uS3 family. In terms of assembly, part of the 30S ribosomal subunit. Forms a tight complex with proteins S10 and S14.

Binds the lower part of the 30S subunit head. Binds mRNA in the 70S ribosome, positioning it for translation. This chain is Small ribosomal subunit protein uS3, found in Cytophaga hutchinsonii (strain ATCC 33406 / DSM 1761 / CIP 103989 / NBRC 15051 / NCIMB 9469 / D465).